A 329-amino-acid chain; its full sequence is Alpha/beta hydrolase domain-containing protein 17C (329 aa).

Low complexity predominate over residues 53-79; it reads GASAPAPAQATAAAAAAQPAPQQPEEG. The tract at residues 53-85 is disordered; it reads GASAPAPAQATAAAAAAQPAPQQPEEGAGAGPG. Residues S211, D276, and H305 each act as charge relay system in the active site.

Belongs to the AB hydrolase superfamily. ABHD17 family. Palmitoylated on cysteine residues located in a cysteine cluster at the N-terminus which promotes membrane localization. Palmitoylation is required for post-synaptic localization and for depalmitoylating activity towards DLG4/PSD95.

It localises to the recycling endosome membrane. The protein resides in the cell projection. It is found in the dendritic spine. The protein localises to the postsynaptic density membrane. The catalysed reaction is S-hexadecanoyl-L-cysteinyl-[protein] + H2O = L-cysteinyl-[protein] + hexadecanoate + H(+). Its activity is regulated as follows. Inhibited by palmostatin-B. Hydrolyzes fatty acids from S-acylated cysteine residues in proteins. Has depalmitoylating activity towards NRAS and DLG4/PSD95. The polypeptide is Alpha/beta hydrolase domain-containing protein 17C (Homo sapiens (Human)).